Here is a 278-residue protein sequence, read N- to C-terminus: MATH domain and coiled-coil domain-containing protein At1g31400 (278 aa).

Residues 6 to 131 (EKRITWTIKN…SGQVKIVAEV (126 aa)) enclose the MATH domain. Residues 232–267 (KLDWLEKKLKEVGKTRMQQLEQNLKDLKESLCWSSD) adopt a coiled-coil conformation.

This is MATH domain and coiled-coil domain-containing protein At1g31400 from Arabidopsis thaliana (Mouse-ear cress).